We begin with the raw amino-acid sequence, 392 residues long: F-box/kelch-repeat protein At4g39550 (392 aa).

Over residues 1–12 (MSSPEKKRKTTK) the composition is skewed to basic residues. The tract at residues 1-27 (MSSPEKKRKTTKKPSPTPQSTTPNPSL) is disordered. Low complexity predominate over residues 18–27 (PQSTTPNPSL). The F-box domain maps to 21 to 67 (TTPNPSLPDDLVVSCLARVSRLYYPTLSLVSKSFRSLIASPDLYKTR). 3 Kelch repeats span residues 148–194 (NIYN…VVEG), 195–242 (KIYV…KSAV), and 244–285 (EGEI…VVEN).

In terms of assembly, part of a SCF (ASK-cullin-F-box) protein ligase complex. Interacts with ASK13 and ASK14.

The protein operates within protein modification; protein ubiquitination. Its function is as follows. Component of SCF(ASK-cullin-F-box) E3 ubiquitin ligase complexes, which may mediate the ubiquitination and subsequent proteasomal degradation of target proteins. The protein is F-box/kelch-repeat protein At4g39550 of Arabidopsis thaliana (Mouse-ear cress).